We begin with the raw amino-acid sequence, 195 residues long: Putative Tricorn-like protease N-terminal subunit (195 aa).

The protein belongs to the peptidase S41B family.

The protein localises to the cytoplasm. Its function is as follows. Degrades oligopeptides in a sequential manner. The polypeptide is Putative Tricorn-like protease N-terminal subunit (triN) (Sulfurisphaera tokodaii (strain DSM 16993 / JCM 10545 / NBRC 100140 / 7) (Sulfolobus tokodaii)).